The following is a 424-amino-acid chain: Enolase (424 aa).

A (2R)-2-phosphoglycerate-binding site is contributed by Gln162. The active-site Proton donor is the Glu204. The Mg(2+) site is built by Asp241, Glu284, and Asp311. 4 residues coordinate (2R)-2-phosphoglycerate: Lys336, Arg365, Ser366, and Lys387. The active-site Proton acceptor is Lys336.

The protein belongs to the enolase family. The cofactor is Mg(2+).

Its subcellular location is the cytoplasm. The protein resides in the secreted. The protein localises to the cell surface. It catalyses the reaction (2R)-2-phosphoglycerate = phosphoenolpyruvate + H2O. It functions in the pathway carbohydrate degradation; glycolysis; pyruvate from D-glyceraldehyde 3-phosphate: step 4/5. Functionally, catalyzes the reversible conversion of 2-phosphoglycerate (2-PG) into phosphoenolpyruvate (PEP). It is essential for the degradation of carbohydrates via glycolysis. This Mesorhizobium japonicum (strain LMG 29417 / CECT 9101 / MAFF 303099) (Mesorhizobium loti (strain MAFF 303099)) protein is Enolase.